The following is a 217-amino-acid chain: MEHSSWHALIKAQLPEGYFGKINQFMEQVYSQGIIYPPKEKVFQALLTTLLEEVKVVILGQDPYHGPGQAQGLSFSVPDSIPAPPSLQNILKELSDDIGVKKSHDLTSWAEQGVLLLNACLTVPAGQANGHAGQIWEPFTDAVIQVVNHLDRPVVFVLWGAYARKKKALVTNPHHLIIESAHPSPLSVYRGFWGSKPFSKANAFLKETGQEPIDWLR.

The active-site Proton acceptor is D62.

Belongs to the uracil-DNA glycosylase (UDG) superfamily. UNG family.

It localises to the cytoplasm. It carries out the reaction Hydrolyzes single-stranded DNA or mismatched double-stranded DNA and polynucleotides, releasing free uracil.. Its function is as follows. Excises uracil residues from the DNA which can arise as a result of misincorporation of dUMP residues by DNA polymerase or due to deamination of cytosine. This chain is Uracil-DNA glycosylase, found in Streptococcus pneumoniae (strain P1031).